Consider the following 392-residue polypeptide: ERBB-3 BINDING PROTEIN 1 (392 aa).

Necessary for nucleolar localization regions lie at residues 1–50 and 298–392; these read MSSD…IVDI and HLQP…NAQE. The interval 48–56 is RNA-binding; the sequence is VDICEKGDS. An interaction with RNA region spans residues 355–372; the sequence is GIKKKKGGGKKKKAQKAG. The Nuclear localization signal motif lies at 357–367; it reads KKKKGGGKKKK. Positions 358-369 are enriched in basic residues; sequence KKKGGGKKKKAQ. Residues 358 to 392 are disordered; the sequence is KKKGGGKKKKAQKAGEKGEASTEAEPMDASSNAQE.

The protein belongs to the peptidase M24 family. As to quaternary structure, component of a ribonucleoprotein complex. Interacts with REIL1 and REIL2. In terms of tissue distribution, strongly expressed in calls, roots and flowers, to a lower extent, in stems and siliques, but hardly detectable in leaves.

It localises to the nucleus. Functionally, binds RNA. Associates with 28S, 18S and 5.8S mature rRNAs, several rRNA precursors and probably U3 small nucleolar RNA. May be involved in regulation of intermediate and late steps of rRNA processing. May be involved in ribosome assembly. Required for expression of cell cycle genes such as CYCD3-1, RNR2A and CDKB1-1. Promotes, in a dose- and auxin-dependent manner, organ growth by stimulating both cell proliferation and expansion, via the regulation of RBR1 levels. The protein is ERBB-3 BINDING PROTEIN 1 of Arabidopsis thaliana (Mouse-ear cress).